A 473-amino-acid polypeptide reads, in one-letter code: MGAVVVDDGPSGVKAPDGGWGWAVLFGCFIITGFSYAFPKAVSVFFKELIREFGVGYSDTAWISSILLAMLYGTGPLCSVCVNRFGCRPVMLVGGLFASMGMVIASFCTSIVQIYLTAGVITGLGLALNFQPSLIMLNRYFDKRRPLANGLSAAGSPVFLCALSPLGQILQHEYGWRGGFLILGGMLLNCCVCGALMRPLEPPKKSEATKEPAEKKAKKKLLDFSVFKDGGFVIYTLAASIMVLGLFVPPVFVVSYAKDLGYQDTKAAFLLTILGFIDIFARPICGMVAGLKWVRPRCVYLFSFAMIFNGFTDLMGSMSVDYGGLVVFCIFFGISYGMVGALQFEVLMAIVGTQKFSSAIGLVLLAEAMAVLIGPPSAGKLLDLTRRYMFVFIIAGIEVTTSALVLALGNFFCIKKKPAEPHTKEAAAEREELNKSEDKTPEDAKVDSIEVEQFLKDEPEKNGEVVTNPETCV.

At 1 to 17 (MGAVVVDDGPSGVKAPD) the chain is on the cytoplasmic side. The helical transmembrane segment at 18–38 (GGWGWAVLFGCFIITGFSYAF) threads the bilayer. Over 39-61 (PKAVSVFFKELIREFGVGYSDTA) the chain is Extracellular. Residues 62–82 (WISSILLAMLYGTGPLCSVCV) traverse the membrane as a helical segment. At 83–91 (NRFGCRPVM) the chain is on the cytoplasmic side. Residues 92–112 (LVGGLFASMGMVIASFCTSIV) form a helical membrane-spanning segment. The Extracellular segment spans residues 113–115 (QIY). Residues 116-136 (LTAGVITGLGLALNFQPSLIM) form a helical membrane-spanning segment. The Cytoplasmic portion of the chain corresponds to 137–149 (LNRYFDKRRPLAN). Residues 150–170 (GLSAAGSPVFLCALSPLGQIL) form a helical membrane-spanning segment. Residues 171–179 (QHEYGWRGG) lie on the Extracellular side of the membrane. A helical membrane pass occupies residues 180–200 (FLILGGMLLNCCVCGALMRPL). The Cytoplasmic portion of the chain corresponds to 201-231 (EPPKKSEATKEPAEKKAKKKLLDFSVFKDGG). The helical transmembrane segment at 232–252 (FVIYTLAASIMVLGLFVPPVF) threads the bilayer. Over 253–268 (VVSYAKDLGYQDTKAA) the chain is Extracellular. Residues 269 to 289 (FLLTILGFIDIFARPICGMVA) traverse the membrane as a helical segment. At 290–297 (GLKWVRPR) the chain is on the cytoplasmic side. Residues 298-318 (CVYLFSFAMIFNGFTDLMGSM) form a helical membrane-spanning segment. Residues 319-321 (SVD) are Extracellular-facing. A helical membrane pass occupies residues 322-342 (YGGLVVFCIFFGISYGMVGAL). At 343–358 (QFEVLMAIVGTQKFSS) the chain is on the cytoplasmic side. Residues 359–379 (AIGLVLLAEAMAVLIGPPSAG) traverse the membrane as a helical segment. At 380 to 388 (KLLDLTRRY) the chain is on the extracellular side. Residues 389-409 (MFVFIIAGIEVTTSALVLALG) traverse the membrane as a helical segment. Residues 410 to 473 (NFFCIKKKPA…EVVTNPETCV (64 aa)) lie on the Cytoplasmic side of the membrane. A disordered region spans residues 421–447 (PHTKEAAAEREELNKSEDKTPEDAKVD). Basolateral sorting signal regions lie at residues 427–449 (AAER…VDSI) and 449–473 (IEVE…ETCV).

It belongs to the major facilitator superfamily. Monocarboxylate porter (TC 2.A.1.13) family. As to quaternary structure, interacts with BSG; interaction mediates SLC16A3 targeting to the plasma membrane.

It localises to the cell membrane. Its subcellular location is the basolateral cell membrane. The enzyme catalyses (S)-lactate(in) + H(+)(in) = (S)-lactate(out) + H(+)(out). It catalyses the reaction pyruvate(out) + H(+)(out) = pyruvate(in) + H(+)(in). Proton-dependent transporter of monocarboxylates such as L-lactate and pyruvate. Plays a predominant role in the L-lactate efflux from highly glycolytic cells. The sequence is that of Monocarboxylate transporter 4 (SLC16A3) from Gallus gallus (Chicken).